The primary structure comprises 594 residues: CTP synthase (594 aa).

The segment at 1-272 (MARPKNVKYV…DLRVLKKLGL (272 aa)) is amidoligase domain. Ser-18 contributes to the CTP binding site. Position 18 (Ser-18) interacts with UTP. 19-24 (SLGKGI) contributes to the ATP binding site. Tyr-59 is an L-glutamine binding site. ATP is bound at residue Asp-76. 2 residues coordinate Mg(2+): Asp-76 and Glu-146. CTP-binding positions include 153–155 (DIE), 193–198 (KTKPTQ), and Lys-229. Residues 193 to 198 (KTKPTQ) and Lys-229 each bind UTP. The Glutamine amidotransferase type-1 domain occupies 299-543 (TIVVCGKYTE…VGAAKSYAAV (245 aa)). Gly-363 contributes to the L-glutamine binding site. Catalysis depends on Cys-390, which acts as the Nucleophile; for glutamine hydrolysis. L-glutamine contacts are provided by residues 391 to 394 (LGMQ), Glu-414, and Arg-471. Active-site residues include His-516 and Glu-518. A compositionally biased stretch (low complexity) spans 562-571 (AEAYAAYSEE). The disordered stretch occupies residues 562–594 (AEAYAAYSEESSAESKSFFPDNGGHDEERDSGQ). Over residues 584–594 (GGHDEERDSGQ) the composition is skewed to basic and acidic residues.

It belongs to the CTP synthase family. In terms of assembly, homotetramer.

It catalyses the reaction UTP + L-glutamine + ATP + H2O = CTP + L-glutamate + ADP + phosphate + 2 H(+). The catalysed reaction is L-glutamine + H2O = L-glutamate + NH4(+). It carries out the reaction UTP + NH4(+) + ATP = CTP + ADP + phosphate + 2 H(+). It participates in pyrimidine metabolism; CTP biosynthesis via de novo pathway; CTP from UDP: step 2/2. Allosterically activated by GTP, when glutamine is the substrate; GTP has no effect on the reaction when ammonia is the substrate. The allosteric effector GTP functions by stabilizing the protein conformation that binds the tetrahedral intermediate(s) formed during glutamine hydrolysis. Inhibited by the product CTP, via allosteric rather than competitive inhibition. Functionally, catalyzes the ATP-dependent amination of UTP to CTP with either L-glutamine or ammonia as the source of nitrogen. Regulates intracellular CTP levels through interactions with the four ribonucleotide triphosphates. In Chlorobium phaeovibrioides (strain DSM 265 / 1930) (Prosthecochloris vibrioformis (strain DSM 265)), this protein is CTP synthase.